The following is a 472-amino-acid chain: Divalent metal cation transporter MntH (472 aa).

11 consecutive transmembrane segments (helical) span residues 59–79 (LLAF…PGNW), 92–112 (MLLS…ALAA), 144–164 (LAII…LNLL), 167–187 (VPII…LLLM), 196–216 (AFVI…IVLA), 233–253 (VVAD…TVMP), 288–308 (LALM…AAVF), 325–345 (LLAP…ALLA), 377–397 (VLTR…YGEQ), 402–422 (LLLL…IPLL), and 439–459 (WLMV…VKLL).

Belongs to the NRAMP family.

The protein localises to the cell inner membrane. H(+)-stimulated, divalent metal cation uptake system. The protein is Divalent metal cation transporter MntH of Xylella fastidiosa (strain Temecula1 / ATCC 700964).